The chain runs to 313 residues: Aspartate carbamoyltransferase catalytic subunit (313 aa).

Positions 51 and 52 each coordinate carbamoyl phosphate. Lys-80 is a binding site for L-aspartate. Carbamoyl phosphate-binding residues include Arg-101, His-129, and Gln-132. 2 residues coordinate L-aspartate: Arg-162 and Arg-224. 2 residues coordinate carbamoyl phosphate: Leu-263 and Pro-264.

The protein belongs to the aspartate/ornithine carbamoyltransferase superfamily. ATCase family. As to quaternary structure, heterododecamer (2C3:3R2) of six catalytic PyrB chains organized as two trimers (C3), and six regulatory PyrI chains organized as three dimers (R2).

It catalyses the reaction carbamoyl phosphate + L-aspartate = N-carbamoyl-L-aspartate + phosphate + H(+). Its pathway is pyrimidine metabolism; UMP biosynthesis via de novo pathway; (S)-dihydroorotate from bicarbonate: step 2/3. Catalyzes the condensation of carbamoyl phosphate and aspartate to form carbamoyl aspartate and inorganic phosphate, the committed step in the de novo pyrimidine nucleotide biosynthesis pathway. The protein is Aspartate carbamoyltransferase catalytic subunit of Bacteroides thetaiotaomicron (strain ATCC 29148 / DSM 2079 / JCM 5827 / CCUG 10774 / NCTC 10582 / VPI-5482 / E50).